The primary structure comprises 479 residues: Serine carboxypeptidase-like 44 (479 aa).

The signal sequence occupies residues 1–22 (MVGGKWRFLEVAVVVMVLQWSC). Disulfide bonds link Cys-92/Cys-352, Cys-253/Cys-270, and Cys-295/Cys-320. Asn-143 is a glycosylation site (N-linked (GlcNAc...) asparagine). Ser-184 is an active-site residue. N-linked (GlcNAc...) asparagine glycosylation is present at Asn-265. Asn-341 carries N-linked (GlcNAc...) asparagine glycosylation. The active site involves Asp-389. Asn-411 is a glycosylation site (N-linked (GlcNAc...) asparagine). Residue His-446 is part of the active site.

It belongs to the peptidase S10 family. In terms of tissue distribution, expressed in seedlings.

Its subcellular location is the secreted. Functionally, probable carboxypeptidase. The sequence is that of Serine carboxypeptidase-like 44 (SCPL44) from Arabidopsis thaliana (Mouse-ear cress).